We begin with the raw amino-acid sequence, 198 residues long: MSELLIELDNYLAAGLHIGTQQKTSDMEKYIFRVRSDGLYVLDIQKTDERIRQIAKLLARYDPEDILVVATRQYGQAPVKKFGEVTGAKTIPGRFIPGTLTNPTYAKFIEPKIIVVTDPRSDAQAVLESKQNGIPVIALCDTENLLSFVDIAIPVNNKGRKAIALVYWLLARQILRERGTIPEDGDLDIEATDFELKF.

Belongs to the universal ribosomal protein uS2 family.

The polypeptide is Small ribosomal subunit protein uS2 (Methanobrevibacter smithii (strain ATCC 35061 / DSM 861 / OCM 144 / PS)).